The following is a 293-amino-acid chain: tRNA pseudouridine synthase B (293 aa).

Asp-40 functions as the Nucleophile in the catalytic mechanism.

Belongs to the pseudouridine synthase TruB family. Type 1 subfamily.

The catalysed reaction is uridine(55) in tRNA = pseudouridine(55) in tRNA. Functionally, responsible for synthesis of pseudouridine from uracil-55 in the psi GC loop of transfer RNAs. The chain is tRNA pseudouridine synthase B from Rickettsia akari (strain Hartford).